Here is a 156-residue protein sequence, read N- to C-terminus: Transcriptional repressor NrdR (156 aa).

A zinc finger lies at 3–34 (CPFCGSMDTRVLDSRPTLDGTAIRRRRECSSC). The region spanning 49–139 (VLVVKKDGRR…VYRDFREVDQ (91 aa)) is the ATP-cone domain.

It belongs to the NrdR family. Zn(2+) serves as cofactor.

In terms of biological role, negatively regulates transcription of bacterial ribonucleotide reductase nrd genes and operons by binding to NrdR-boxes. This chain is Transcriptional repressor NrdR, found in Thermotoga maritima (strain ATCC 43589 / DSM 3109 / JCM 10099 / NBRC 100826 / MSB8).